The chain runs to 371 residues: Transaldolase (371 aa).

Lys132 is covalently cross-linked (Isoglutamyl lysine isopeptide (Lys-Gln) (interchain with Q-Cter in protein Pup)). Lys142 (schiff-base intermediate with substrate) is an active-site residue.

It belongs to the transaldolase family. Type 2 subfamily.

It is found in the cytoplasm. It catalyses the reaction D-sedoheptulose 7-phosphate + D-glyceraldehyde 3-phosphate = D-erythrose 4-phosphate + beta-D-fructose 6-phosphate. It functions in the pathway carbohydrate degradation; pentose phosphate pathway; D-glyceraldehyde 3-phosphate and beta-D-fructose 6-phosphate from D-ribose 5-phosphate and D-xylulose 5-phosphate (non-oxidative stage): step 2/3. Functionally, transaldolase is important for the balance of metabolites in the pentose-phosphate pathway. The chain is Transaldolase (tal) from Mycolicibacterium smegmatis (strain ATCC 700084 / mc(2)155) (Mycobacterium smegmatis).